The sequence spans 451 residues: Spermidine sinapoyl-CoA acyltransferase (451 aa).

Y47, H169, S294, D316, and L378 together coordinate spermidine. The active-site Proton acceptor is the H169. The Proton acceptor role is filled by D391.

This sequence belongs to the plant acyltransferase family. As to quaternary structure, monomer. In terms of tissue distribution, predominantly expressed in siliques, especially in seeds around the embryo, and, at low levels, in flowers. Barely detectable in stems, leaves, and roots.

It catalyses the reaction 2 (E)-sinapoyl-CoA + spermidine = N(1),N(8)-bis[(E)-sinapoyl]-spermidine + 2 CoA + 2 H(+). Its pathway is amine and polyamine metabolism; spermidine metabolism. Its function is as follows. Spermidine sinapoyl-CoA acyltransferase that mediates the accumulation of disinapoyl spermidine conjugates in seeds. Catalyzes the two conjugating steps required for the biosynthesis of N1,N8-disipanoyl-spermidine. Can also use putrescine as an acyl acceptor to convert it into monosinapoyl-putrescine. The polypeptide is Spermidine sinapoyl-CoA acyltransferase (Arabidopsis thaliana (Mouse-ear cress)).